Reading from the N-terminus, the 335-residue chain is tRNA N6-adenosine threonylcarbamoyltransferase (335 aa).

Residues histidine 110 and histidine 114 each coordinate Fe cation. Substrate contacts are provided by residues 132 to 136 (LVSGG), aspartate 165, glycine 178, and asparagine 271. Aspartate 299 provides a ligand contact to Fe cation.

The protein belongs to the KAE1 / TsaD family. Requires Fe(2+) as cofactor.

The protein localises to the cytoplasm. The catalysed reaction is L-threonylcarbamoyladenylate + adenosine(37) in tRNA = N(6)-L-threonylcarbamoyladenosine(37) in tRNA + AMP + H(+). Required for the formation of a threonylcarbamoyl group on adenosine at position 37 (t(6)A37) in tRNAs that read codons beginning with adenine. Is involved in the transfer of the threonylcarbamoyl moiety of threonylcarbamoyl-AMP (TC-AMP) to the N6 group of A37, together with TsaE and TsaB. TsaD likely plays a direct catalytic role in this reaction. In Campylobacter jejuni subsp. doylei (strain ATCC BAA-1458 / RM4099 / 269.97), this protein is tRNA N6-adenosine threonylcarbamoyltransferase.